Consider the following 276-residue polypeptide: MPDYAIGDVQGCYDPLQRLLELIDFNEKEDCLWFVGDLVNRGPDSLAVLRFIYSLPVKPKITLGNHDLHLLGLLFGGQPWKGHDDTLEEVMLADDGEELGHWLRKQSLLCRSSELNIVMCHAGIAPLWDLSKAMDLANELEAVLSGDSYHEFFAQMYGNKPDIWSDDLVGLDRLRVITNYFTRMRYCDAHGRLDLGYKGTLSKAPNHLYPWFEVPCRKEIEMDIVFGHWAALMGRSSHPRIHAIDTGCLWGGQLTALRLQDRQRFSVPGYGVSRFE.

This sequence belongs to the Ap4A hydrolase family.

The catalysed reaction is P(1),P(4)-bis(5'-adenosyl) tetraphosphate + H2O = 2 ADP + 2 H(+). Functionally, hydrolyzes diadenosine 5',5'''-P1,P4-tetraphosphate to yield ADP. The protein is Bis(5'-nucleosyl)-tetraphosphatase, symmetrical of Legionella pneumophila subsp. pneumophila (strain Philadelphia 1 / ATCC 33152 / DSM 7513).